The following is a 104-amino-acid chain: Matrix Gla protein (104 aa).

Positions 1–19 (MKSLLPLAILAALAVATLC) are cleaved as a signal peptide. Glu21 carries the 4-carboxyglutamate modification. Phosphoserine occurs at positions 22, 25, and 28. Positions 51-97 (RAKAQKRVQERNKPAYEINREACDDYKLCERYAMVYGYNAAYNRYFR) constitute a Gla domain. 4-carboxyglutamate is present on residues Glu60, Glu67, and Glu71. Cysteines 73 and 79 form a disulfide.

It belongs to the osteocalcin/matrix Gla protein family. Post-translationally, requires vitamin K-dependent gamma-carboxylation for its function.

It is found in the secreted. In terms of biological role, associates with the organic matrix of bone and cartilage. Thought to act as an inhibitor of bone formation. In Mus musculus (Mouse), this protein is Matrix Gla protein (Mgp).